The primary structure comprises 252 residues: Hydroxyacylglutathione hydrolase (252 aa).

Positions 54, 56, 58, 59, 113, 132, and 170 each coordinate Zn(2+).

Belongs to the metallo-beta-lactamase superfamily. Glyoxalase II family. As to quaternary structure, monomer. Requires Zn(2+) as cofactor.

The enzyme catalyses an S-(2-hydroxyacyl)glutathione + H2O = a 2-hydroxy carboxylate + glutathione + H(+). It functions in the pathway secondary metabolite metabolism; methylglyoxal degradation; (R)-lactate from methylglyoxal: step 2/2. Its function is as follows. Thiolesterase that catalyzes the hydrolysis of S-D-lactoyl-glutathione to form glutathione and D-lactic acid. In Gloeobacter violaceus (strain ATCC 29082 / PCC 7421), this protein is Hydroxyacylglutathione hydrolase.